The chain runs to 354 residues: Selenide, water dikinase (354 aa).

C23 is an active-site residue. ATP-binding positions include K26 and 54–56 (TSD). D57 contacts Mg(2+). Residues D74, D97, and 145–147 (GHS) contribute to the ATP site. Mg(2+) is bound at residue D97. D233 lines the Mg(2+) pocket.

The protein belongs to the selenophosphate synthase 1 family. Class I subfamily. Homodimer. The cofactor is Mg(2+).

The enzyme catalyses hydrogenselenide + ATP + H2O = selenophosphate + AMP + phosphate + 2 H(+). Functionally, synthesizes selenophosphate from selenide and ATP. The chain is Selenide, water dikinase from Burkholderia cenocepacia (strain ATCC BAA-245 / DSM 16553 / LMG 16656 / NCTC 13227 / J2315 / CF5610) (Burkholderia cepacia (strain J2315)).